The sequence spans 293 residues: 4-hydroxy-tetrahydrodipicolinate synthase (293 aa).

Residue Thr45 participates in pyruvate binding. Tyr133 serves as the catalytic Proton donor/acceptor. Lys162 functions as the Schiff-base intermediate with substrate in the catalytic mechanism. A pyruvate-binding site is contributed by Ile204.

It belongs to the DapA family. Homotetramer; dimer of dimers.

It localises to the cytoplasm. It carries out the reaction L-aspartate 4-semialdehyde + pyruvate = (2S,4S)-4-hydroxy-2,3,4,5-tetrahydrodipicolinate + H2O + H(+). It functions in the pathway amino-acid biosynthesis; L-lysine biosynthesis via DAP pathway; (S)-tetrahydrodipicolinate from L-aspartate: step 3/4. Catalyzes the condensation of (S)-aspartate-beta-semialdehyde [(S)-ASA] and pyruvate to 4-hydroxy-tetrahydrodipicolinate (HTPA). The protein is 4-hydroxy-tetrahydrodipicolinate synthase of Brucella suis biovar 1 (strain 1330).